We begin with the raw amino-acid sequence, 366 residues long: tRNA-queuosine alpha-mannosyltransferase (366 aa).

This sequence belongs to the glycosyltransferase group 1 family. Glycosyltransferase 4 subfamily.

The protein localises to the cytoplasm. It is found in the nucleus. It catalyses the reaction queuosine(34) in tRNA(Asp) + GDP-alpha-D-mannose = O-4''-alpha-D-mannosylqueuosine(34) in tRNA(Asp) + GDP + H(+). Its function is as follows. Glycosyltransferase that specifically catalyzes mannosylation of cytoplasmic tRNA(Asp) modified with queuosine at position 34 (queuosine(34)). Mannosylates the cyclopentene moiety of queuosine(34) in tRNA(Asp) to form mannosyl-queuosine(34). Mannosylation of queuosine(34) in tRNA(Asp) is required to slow-down elongation at cognate codons, GAC and GAU, thereby regulating protein translation. The chain is tRNA-queuosine alpha-mannosyltransferase (GTDC1) from Bos taurus (Bovine).